The following is a 769-amino-acid chain: Metal transporter CNNM4 (769 aa).

Over 1–175 (MAASAGCYYG…RLRVLEEEKP (175 aa)) the chain is Extracellular. N-linked (GlcNAc...) asparagine glycans are attached at residues asparagine 99 and asparagine 115. One can recognise a CNNM transmembrane domain in the interval 175 to 355 (PLLPIWLQAC…EPYSGIVREE (181 aa)). A helical transmembrane segment spans residues 176-196 (LLPIWLQACIIAVLLTLSGIF). Over 197–237 (SGLNLGLMALDPMELRVVQRCGTEKEKRYASKIEPVRRKGN) the chain is Cytoplasmic. An intramembrane region (helical) is located at residues 238 to 258 (YLLCSLLLGNVLVNTTLTALL). The Cytoplasmic portion of the chain corresponds to 259–261 (DEL). Residues 262-282 (IGSGLAAVLASTTGIVVLGEI) form a helical membrane-spanning segment. Residues 283 to 292 (VPQALCSRHG) are Extracellular-facing. The chain crosses the membrane as a helical span at residues 293-313 (LAVGANTLWLTRIFMLLTFPV). The Cytoplasmic segment spans residues 314–769 (AYPVSRLLDC…SQHSLQHNAV (456 aa)). CBS domains follow at residues 374–435 (MTKV…CTPL) and 442–508 (YSHP…ILDE). The tract at residues 717–769 (LMSSRLDSSPQSPEGGTRKPDSTLSERSEVLEDETTSLLNQRNSQHSLQHNAV) is disordered. Residues 721-730 (RLDSSPQSPE) are compositionally biased toward polar residues. Over residues 732-746 (GTRKPDSTLSERSEV) the composition is skewed to basic and acidic residues. Residues 752-769 (TSLLNQRNSQHSLQHNAV) are compositionally biased toward polar residues.

The protein belongs to the ACDP family.

It localises to the cell membrane. Functionally, probable metal transporter. In Xenopus tropicalis (Western clawed frog), this protein is Metal transporter CNNM4 (cnnm4).